A 216-amino-acid polypeptide reads, in one-letter code: Adenylate kinase (216 aa).

Residue 13–18 (GAGKGT) coordinates ATP. The NMP stretch occupies residues 33–66 (TTGDALRANKDMDISDMDTEYDTPREYMEAGDLV). AMP is bound by residues Thr-34, Arg-39, 64 to 66 (DLV), 89 to 92 (GYPR), and Gln-96. The tract at residues 125 to 162 (GRRVCDDCGTNYHVEFNQPEEDGVCDECGGDLIQRDDD) is LID. ATP is bound at residue Arg-126. Zn(2+) is bound by residues Cys-129, Cys-132, Cys-149, and Cys-152. The AMP site is built by Arg-159 and Arg-170. Gln-198 contacts ATP.

The protein belongs to the adenylate kinase family. In terms of assembly, monomer.

The protein resides in the cytoplasm. It carries out the reaction AMP + ATP = 2 ADP. Its pathway is purine metabolism; AMP biosynthesis via salvage pathway; AMP from ADP: step 1/1. In terms of biological role, catalyzes the reversible transfer of the terminal phosphate group between ATP and AMP. Plays an important role in cellular energy homeostasis and in adenine nucleotide metabolism. The chain is Adenylate kinase from Haloarcula marismortui (strain ATCC 43049 / DSM 3752 / JCM 8966 / VKM B-1809) (Halobacterium marismortui).